Here is a 69-residue protein sequence, read N- to C-terminus: UPF0150 protein ssr1258 (69 aa).

It belongs to the UPF0150 family.

The protein is UPF0150 protein ssr1258 of Synechocystis sp. (strain ATCC 27184 / PCC 6803 / Kazusa).